We begin with the raw amino-acid sequence, 369 residues long: Putative 2-aminoethylphosphonate import ATP-binding protein PhnT (369 aa).

The ABC transporter domain maps to 19 to 250; sequence IVLDSLRVAY…PPNRFAAEFL (232 aa). An ATP-binding site is contributed by 51–58; sequence GPSGSGKT.

It belongs to the ABC transporter superfamily. 2-aminoethylphosphonate importer (TC 3.A.1.11.5) family.

The protein localises to the cell inner membrane. Functionally, probably part of the PhnSTUV complex (TC 3.A.1.11.5) involved in 2-aminoethylphosphonate import. Probably responsible for energy coupling to the transport system. This chain is Putative 2-aminoethylphosphonate import ATP-binding protein PhnT (phnT), found in Salmonella paratyphi A (strain ATCC 9150 / SARB42).